Consider the following 148-residue polypeptide: Large ribosomal subunit protein uL22 (148 aa).

It belongs to the universal ribosomal protein uL22 family. As to quaternary structure, part of the 50S ribosomal subunit.

This protein binds specifically to 23S rRNA. It makes multiple contacts with different domains of the 23S rRNA in the assembled 50S subunit and ribosome. Its function is as follows. The globular domain of the protein is located near the polypeptide exit tunnel on the outside of the subunit, while an extended beta-hairpin is found that lines the wall of the exit tunnel in the center of the 70S ribosome. The polypeptide is Large ribosomal subunit protein uL22 (Thermoplasma volcanium (strain ATCC 51530 / DSM 4299 / JCM 9571 / NBRC 15438 / GSS1)).